The primary structure comprises 773 residues: Probable C-mannosyltransferase DPY19L2 (773 aa).

The segment at 1-45 (MVGPTRSKLREGSSDRPQSSCTGQARRRWSAATMEPQQERSAPQE) is disordered. Residues 1 to 122 (MVGPTRSKLR…ALQMHRFSHR (122 aa)) lie on the Nuclear side of the membrane. A helical transmembrane segment spans residues 123–143 (TLFGLAIFVGILHWLHLITLF). At 144–209 (ENDHHFSHLS…INTVKRFHLY (66 aa)) the chain is on the perinuclear space side. Residues 210-230 (PEVVIAYWYRTIIGIMNLFGI) form a helical membrane-spanning segment. The Nuclear portion of the chain corresponds to 231–256 (ETKTCWNVTRMEPLNEVQSCEGLGDP). The helical transmembrane segment at 257-277 (ACFYIGVIFILNGLMMGLFFI) threads the bilayer. Residues 278–311 (YSTYLSGSQLGGLITVACYFFNHGEATRVMWTPP) lie on the Perinuclear space side of the membrane. The helical transmembrane segment at 312 to 332 (LRESFSYPFLVLQMYILTIIL) threads the bilayer. The Nuclear portion of the chain corresponds to 333–358 (RTSTVHKKHYMALCFSNVAFMLPWQF). A helical membrane pass occupies residues 359 to 379 (AQFILFTQIASLFPMYVVGYI). Residues 380–386 (EPSKFQK) lie on the Perinuclear space side of the membrane. Residues 387 to 407 (IIYVNMSSVALCFILMFGNSM) form a helical membrane-spanning segment. Residues 408–437 (YLSSYYSSCLLVTWAIMQKKSKIQKLGGTE) lie on the Nuclear side of the membrane. Residues 438-458 (LQFWLIQGCFWWCGTIILKFL) form a helical membrane-spanning segment. Residues 459-507 (TSKICGVSDHIRLSDLIAARILRYTDFDTLIYTCAPEFDFMEQATPLRY) are Perinuclear space-facing. A helical membrane pass occupies residues 508 to 528 (IKTLLLPLILVITYLIFKKIV). The Nuclear portion of the chain corresponds to 529-548 (RDIMCVLYTNTYVRKQLLDN). A helical transmembrane segment spans residues 549–569 (AELIFHTLQLLAFTGLAILIM). Residues 570 to 590 (RLKLFLTPHMCIMASLICSQR) lie on the Perinuclear space side of the membrane. The helical transmembrane segment at 591 to 611 (LFGWLFCRIHFENVVFGILTM) threads the bilayer. Residues 612–773 (MSIQGCANLH…NSMYRVLKIN (162 aa)) are Nuclear-facing.

Belongs to the dpy-19 family. As to quaternary structure, interacts with FAM209. Predominantly expressed in testis. Present in testis but absent from epididymal sperm (at protein level).

The protein localises to the nucleus inner membrane. Its function is as follows. Probable C-mannosyltransferase that mediates C-mannosylation of tryptophan residues on target proteins. In terms of biological role, required during spermatogenesis for sperm head elongation and acrosome formation. Also plays a role in acrosome attachment to the nuclear envelope. The protein is Probable C-mannosyltransferase DPY19L2 (Dpy19l2) of Mus musculus (Mouse).